We begin with the raw amino-acid sequence, 133 residues long: Small ribosomal subunit protein uS8 (133 aa).

The interval 1-29 is disordered; it reads MANHDPISDMLTRIRNASEKRHETTRIPA. Over residues 16–25 the composition is skewed to basic and acidic residues; that stretch reads NASEKRHETT.

Belongs to the universal ribosomal protein uS8 family. In terms of assembly, part of the 30S ribosomal subunit. Contacts proteins S5 and S12.

One of the primary rRNA binding proteins, it binds directly to 16S rRNA central domain where it helps coordinate assembly of the platform of the 30S subunit. The chain is Small ribosomal subunit protein uS8 from Prochlorococcus marinus (strain MIT 9211).